The chain runs to 732 residues: Zinc/cadmium/lead-transporting P-type ATPase (732 aa).

Residues 1 to 124 (MSTPDNHGKK…QAADEPQASR (124 aa)) lie on the Cytoplasmic side of the membrane. An HMA domain is found at 48 to 112 (TRYSWKVSGM…AVQKAGYSLR (65 aa)). Zn(2+) is bound by residues Asp58, Cys59, and Cys62. Residues 125–145 (LKENLPLITLIVMMAISWGLE) traverse the membrane as a helical segment. Position 146 (Gln146) is a topological domain, periplasmic. The helical transmembrane segment at 147-167 (FNHPFGQLAFIATTLVGLYPI) threads the bilayer. Residues 168–179 (ARQALRLIKSGS) lie on the Cytoplasmic side of the membrane. The chain crosses the membrane as a helical span at residues 180 to 197 (YFAIETLMSVAAIGALFI). Over 198–202 (GATAE) the chain is Periplasmic. Residues 203–222 (AAMVLLLFLIGERLEGWAAS) traverse the membrane as a helical segment. Residues 223 to 356 (RARQGVSALM…IDRFSRIYTP (134 aa)) are Cytoplasmic-facing. A helical membrane pass occupies residues 357–377 (AIMAVALLVTLVPPLLFAASW). Residues 378–383 (QEWIYK) lie on the Periplasmic side of the membrane. The chain crosses the membrane as a helical span at residues 384–404 (GLTLLLIGCPCALVISTPAAI). Zn(2+)-binding residues include Cys392 and Cys394. Residues 405 to 685 (TSGLAAAARR…RATHANIRQN (281 aa)) lie on the Cytoplasmic side of the membrane. The active-site 4-aspartylphosphate intermediate is Asp436. Mg(2+) contacts are provided by Asp436, Thr438, and Asp628. A helical transmembrane segment spans residues 686–702 (ITIALGLKGIFLVTTLL). Residues 703–707 (GMTGL) are Periplasmic-facing. A helical membrane pass occupies residues 708–729 (WLAVLADTGATVLVTANALRLL). Asp714 contacts Zn(2+). The Cytoplasmic segment spans residues 730-732 (RRR).

The protein belongs to the cation transport ATPase (P-type) (TC 3.A.3) family. Type IB subfamily.

The protein resides in the cell inner membrane. It carries out the reaction Pb(2+)(in) + ATP + H2O = Pb(2+)(out) + ADP + phosphate + H(+). The catalysed reaction is Zn(2+)(in) + ATP + H2O = Zn(2+)(out) + ADP + phosphate + H(+). The enzyme catalyses Cd(2+)(in) + ATP + H2O = Cd(2+)(out) + ADP + phosphate + H(+). In terms of biological role, confers resistance to zinc, cadmium and lead. Couples the hydrolysis of ATP with the export of zinc, cadmium or lead. The sequence is that of Zinc/cadmium/lead-transporting P-type ATPase from Shigella sonnei (strain Ss046).